The sequence spans 212 residues: MRDPVETYMNLVPMVVEQTNRGERAYDIFSRLLKERIIFLTGPVEDGMSTLVVAQLLFLEAENPKKEISMYINSPGGVVTSGLAIYDTMQFIRPPVSTLCTGQAASMGSLLLAAGHKDMRFSLPNARIMVHQPSGGFQGQATDIMLHAQEILNLKKRLNEIYVHHTGQTYKAIEDALERDKFLTADMARDFGIVDKVIDKRAEESAPGPKVA.

The active-site Nucleophile is the Ser-106. Residue His-131 is part of the active site.

The protein belongs to the peptidase S14 family. In terms of assembly, fourteen ClpP subunits assemble into 2 heptameric rings which stack back to back to give a disk-like structure with a central cavity, resembling the structure of eukaryotic proteasomes.

Its subcellular location is the cytoplasm. The catalysed reaction is Hydrolysis of proteins to small peptides in the presence of ATP and magnesium. alpha-casein is the usual test substrate. In the absence of ATP, only oligopeptides shorter than five residues are hydrolyzed (such as succinyl-Leu-Tyr-|-NHMec, and Leu-Tyr-Leu-|-Tyr-Trp, in which cleavage of the -Tyr-|-Leu- and -Tyr-|-Trp bonds also occurs).. Its function is as follows. Cleaves peptides in various proteins in a process that requires ATP hydrolysis. Has a chymotrypsin-like activity. Plays a major role in the degradation of misfolded proteins. The sequence is that of ATP-dependent Clp protease proteolytic subunit from Rhodopseudomonas palustris (strain HaA2).